A 180-amino-acid polypeptide reads, in one-letter code: ATP synthase subunit delta (180 aa).

This sequence belongs to the ATPase delta chain family. F-type ATPases have 2 components, F(1) - the catalytic core - and F(0) - the membrane proton channel. F(1) has five subunits: alpha(3), beta(3), gamma(1), delta(1), epsilon(1). F(0) has three main subunits: a(1), b(2) and c(10-14). The alpha and beta chains form an alternating ring which encloses part of the gamma chain. F(1) is attached to F(0) by a central stalk formed by the gamma and epsilon chains, while a peripheral stalk is formed by the delta and b chains.

Its subcellular location is the cell inner membrane. F(1)F(0) ATP synthase produces ATP from ADP in the presence of a proton or sodium gradient. F-type ATPases consist of two structural domains, F(1) containing the extramembraneous catalytic core and F(0) containing the membrane proton channel, linked together by a central stalk and a peripheral stalk. During catalysis, ATP synthesis in the catalytic domain of F(1) is coupled via a rotary mechanism of the central stalk subunits to proton translocation. Its function is as follows. This protein is part of the stalk that links CF(0) to CF(1). It either transmits conformational changes from CF(0) to CF(1) or is implicated in proton conduction. The polypeptide is ATP synthase subunit delta (Legionella pneumophila (strain Paris)).